A 494-amino-acid chain; its full sequence is UPF0371 protein SSA_0208 (494 aa).

This sequence belongs to the UPF0371 family.

In Streptococcus sanguinis (strain SK36), this protein is UPF0371 protein SSA_0208.